A 283-amino-acid chain; its full sequence is MVIQWFPGHMAKARREVTEKLKLIDIVYELVDARIPMSSRNPMIEDILKNKPRIMLLNKADKADSSVTKAWKQHFEKDGIPTLAINSVNGQGLNQILPASKELLKEKFDKMKAKGVKPRAIRALIVGIPNVGKSTLINRLAKKNIAKTGDRPGVTTAQQWVKVGKELELLDTPGILWPKFEDELVGLRLAATGAIKDSIINLQDVAVYGLRFLEENYPERLKKRYDLEEIPEEIAALFDEIGKKRGCLMAGGEINYDKTTEVIIRDIRTEKFGPLSFEKPEDM.

One can recognise a CP-type G domain in the interval 14–178 (RREVTEKLKL…LLDTPGILWP (165 aa)). GTP-binding positions include 58–61 (NKAD), 86–87 (NS), 130–135 (NVGKST), and Gly174.

It belongs to the TRAFAC class YlqF/YawG GTPase family. MTG1 subfamily. Interacts with ctc. Interacts with the immature 50S ribosome subunit. 2 molecules of rbgA bind to one 50S subunit.

It is found in the cytoplasm. Essential protein that is required for a late step of 50S ribosomal subunit assembly. Has GTPase activity that is stimulated by interaction with the immature 50S ribosome subunit. Binds to the 23S rRNA. Required for the association of ribosomal proteins rplP and rpmA with the large subunit. The sequence is that of Ribosome biogenesis GTPase A from Bacillus licheniformis (strain ATCC 14580 / DSM 13 / JCM 2505 / CCUG 7422 / NBRC 12200 / NCIMB 9375 / NCTC 10341 / NRRL NRS-1264 / Gibson 46).